We begin with the raw amino-acid sequence, 369 residues long: Protein RIC-3 (369 aa).

An N-terminal signal peptide occupies residues 1–28 (MAYSTVQRVALASGLVLALSLLLPKAFL). The Lumenal portion of the chain corresponds to 29-95 (SRGKRQEPPP…AGGGGSGRGL (67 aa)). The tract at residues 30 to 67 (RGKRQEPPPTPEGKLGRFPPMMHHHQAPSDGQTPGARF) is disordered. Residues 96 to 116 (MGQIIPIYGFGIFLYILYILF) traverse the membrane as a helical segment. Residues 117–369 (KLSKGKTTAE…LRKRNPQGLE (253 aa)) lie on the Cytoplasmic side of the membrane. Residues 140–169 (RKITSFELAQLQEKLKETEAAMEKLINRVG) adopt a coiled-coil conformation. K202 is subject to N6-acetyllysine; alternate. K202 participates in a covalent cross-link: Glycyl lysine isopeptide (Lys-Gly) (interchain with G-Cter in ubiquitin); alternate. 2 disordered regions span residues 272 to 295 (ESDHLGWESLPTDPRAQEDNSVTS) and 316 to 369 (LAEN…QGLE). The segment covering 332 to 346 (ETTKEEWSQDFKDEG) has biased composition (basic and acidic residues). Residues 360–369 (LRKRNPQGLE) show a composition bias toward basic residues.

It belongs to the ric-3 family. As to quaternary structure, monomer and homodimer. Interacts with CHRNA7, CHRNA3, CHRNA4, CHRNB2, CHRNB4 and HTR3A. In terms of tissue distribution, broadly expressed, with high levels in muscle, brain, heart, pancreas and testis. In the central nervous system, highest levels are detected in the cerebellum and pituitary gland. Over-expressed in brains from patients with bipolar disease or schizophrenia. Isoform 5 is predominantly expressed in the brain.

The protein resides in the endoplasmic reticulum membrane. It is found in the golgi apparatus membrane. Molecular chaperone which facilitates proper subunit assembly and surface trafficking of alpha-7 (CHRNA7) and alpha-8 (CHRNA8) nicotinic acetylcholine receptors. May also promote functional expression of homomeric serotoninergic 5-HT3 receptors, and of heteromeric acetylcholine receptors alpha-3/beta-2, alpha-3/beta-4, alpha-4/beta-2 and alpha-4/beta-4. This is Protein RIC-3 (RIC3) from Homo sapiens (Human).